Reading from the N-terminus, the 355-residue chain is Peptide chain release factor 1 (355 aa).

Gln231 bears the N5-methylglutamine mark. The disordered stretch occupies residues 283–303 (LAKESEARKSQVGSGDRSERI).

Belongs to the prokaryotic/mitochondrial release factor family. Post-translationally, methylated by PrmC. Methylation increases the termination efficiency of RF1.

The protein resides in the cytoplasm. Peptide chain release factor 1 directs the termination of translation in response to the peptide chain termination codons UAG and UAA. The polypeptide is Peptide chain release factor 1 (Campylobacter lari (strain RM2100 / D67 / ATCC BAA-1060)).